The chain runs to 473 residues: 1-aminocyclopropane-1-carboxylate synthase (473 aa).

Substrate-binding positions include 84–85 (DY), Tyr-145, and Asp-151. Residue Lys-273 is modified to N6-(pyridoxal phosphate)lysine.

The protein belongs to the class-I pyridoxal-phosphate-dependent aminotransferase family. As to quaternary structure, homodimer. Requires pyridoxal 5'-phosphate as cofactor.

It catalyses the reaction S-adenosyl-L-methionine = 1-aminocyclopropane-1-carboxylate + S-methyl-5'-thioadenosine + H(+). The enzyme catalyses (2S)-2-amino-3-butenoate + H2O = 2-oxobutanoate + NH4(+). It participates in alkene biosynthesis; ethylene biosynthesis via S-adenosyl-L-methionine; ethylene from S-adenosyl-L-methionine: step 1/2. With respect to regulation, inhibited by L-aminoethoxyvinylglycine (AVG). Inhibited by L-vinylglycine (L-VG). Inhibited by S-methylmethionine through a L-VG ketimine intermediate. Its function is as follows. Catalyzes the formation of 1-aminocyclopropane-1-carboxylate, a direct precursor of ethylene in higher plants. Also catalyzes the conversion of L-vinylglycine (L-VG) to alpha-ketobutyrate and ammonia. Can use S-methylmethionine as substrate. This Malus domestica (Apple) protein is 1-aminocyclopropane-1-carboxylate synthase.